The following is a 309-amino-acid chain: Small ribosomal subunit biogenesis GTPase RsgA (309 aa).

Residues 88-247 (KNLITRPPVA…IADTPGFNKP (160 aa)) enclose the CP-type G domain. GTP contacts are provided by residues 137–140 (TKRD) and 189–197 (GPSGVGKSS). Cys-272, Cys-277, His-279, and Cys-285 together coordinate Zn(2+).

Belongs to the TRAFAC class YlqF/YawG GTPase family. RsgA subfamily. In terms of assembly, monomer. Associates with 30S ribosomal subunit, binds 16S rRNA. The cofactor is Zn(2+).

The protein localises to the cytoplasm. Functionally, one of several proteins that assist in the late maturation steps of the functional core of the 30S ribosomal subunit. Helps release RbfA from mature subunits. May play a role in the assembly of ribosomal proteins into the subunit. Circularly permuted GTPase that catalyzes slow GTP hydrolysis, GTPase activity is stimulated by the 30S ribosomal subunit. This is Small ribosomal subunit biogenesis GTPase RsgA from Prochlorococcus marinus (strain SARG / CCMP1375 / SS120).